The following is a 407-amino-acid chain: Peptidase T (407 aa).

H77 contributes to the Zn(2+) binding site. The active site involves D79. Residue D138 coordinates Zn(2+). E172 (proton acceptor) is an active-site residue. Residues E173, D195, and H377 each coordinate Zn(2+).

This sequence belongs to the peptidase M20B family. Zn(2+) is required as a cofactor.

The protein localises to the cytoplasm. The enzyme catalyses Release of the N-terminal residue from a tripeptide.. Its function is as follows. Cleaves the N-terminal amino acid of tripeptides. In Aeromonas salmonicida (strain A449), this protein is Peptidase T.